A 648-amino-acid polypeptide reads, in one-letter code: Threonine--tRNA ligase (648 aa).

A TGS domain is found at 1–62 (MVEIILPDGS…PHGAQVAIIT (62 aa)). Residues 243-536 (DHRRIGKDLD…LVEHYAGWFP (294 aa)) are catalytic. Residues Cys336, His387, and His513 each contribute to the Zn(2+) site.

Belongs to the class-II aminoacyl-tRNA synthetase family. Homodimer. Requires Zn(2+) as cofactor.

The protein resides in the cytoplasm. It carries out the reaction tRNA(Thr) + L-threonine + ATP = L-threonyl-tRNA(Thr) + AMP + diphosphate + H(+). Catalyzes the attachment of threonine to tRNA(Thr) in a two-step reaction: L-threonine is first activated by ATP to form Thr-AMP and then transferred to the acceptor end of tRNA(Thr). Also edits incorrectly charged L-seryl-tRNA(Thr). The chain is Threonine--tRNA ligase from Magnetococcus marinus (strain ATCC BAA-1437 / JCM 17883 / MC-1).